A 379-amino-acid chain; its full sequence is uncharacterized protein (379 aa).

The protein belongs to the herpesviridae US22 family.

This is an uncharacterized protein from Human cytomegalovirus (strain AD169) (HHV-5).